Here is a 652-residue protein sequence, read N- to C-terminus: MAEITTREKLHEVALSAPKTSGVYLWKDKAGTVIYVGKAKSLKNRLSSYFTSNRDIKTRILVSRAESIEYIQTENEYEALLLENTLIKKHKPRYNINLKDGKTYPVLKLTNEEFPKVYRTRNIKNDGSKYFGPFPNVSAVDMFLTLIKHNYTLRQCKQLKKRETPCLYFHIGRCKAPCCGKISAEEYGKDIEEITLLLEGEMEDVSGTLKEKMKEAAEKKEFEKAARLRDGIQAVYALRGQNIVQDMDPESRDYIAWAFEGAMVSIAVLKMRNGRLVGRDLYRSHSLKEEGEILSEFISAYYTSANEVPPKIFIPQAAEGNALIEKWLNEELHAKTRISIIPLEKESLAAEERSAADSLTEIEEAASKTIGYAVKEPAPLSAQEEKLNLSPAEIKHHKAALKMARFNAKEDAMRRLREQGDFAAVEDLQKRLNLPCLPQRIEGFDIAHLGGTFTVAALISFKEGNPDKKNYRIFRLKNTDGVIDDYASMREVIARRYTRLLNEGADLPDLILIDGGIGQVNAASKIVDALDLGIPVIGLAEKNEEVYFPHNSKPVILPRRSDALRLLQRIRDEAHRFSNTRNNKLRRANKLKTEFENLPHIGKKRAHVLLKAFGSTENLKTLTAQALSETAKISLKQAEEVLDAVKTTNNNN.

The GIY-YIG domain occupies 19–96 (KTSGVYLWKD…IKKHKPRYNI (78 aa)). Residues 203-238 (EDVSGTLKEKMKEAAEKKEFEKAARLRDGIQAVYAL) form the UVR domain.

Belongs to the UvrC family. In terms of assembly, interacts with UvrB in an incision complex.

Its subcellular location is the cytoplasm. In terms of biological role, the UvrABC repair system catalyzes the recognition and processing of DNA lesions. UvrC both incises the 5' and 3' sides of the lesion. The N-terminal half is responsible for the 3' incision and the C-terminal half is responsible for the 5' incision. The sequence is that of UvrABC system protein C from Treponema denticola (strain ATCC 35405 / DSM 14222 / CIP 103919 / JCM 8153 / KCTC 15104).